The primary structure comprises 220 residues: ATP-dependent Clp protease proteolytic subunit (220 aa).

The Nucleophile role is filled by Ser125. Residue His150 is part of the active site.

The protein belongs to the peptidase S14 family. In terms of assembly, fourteen ClpP subunits assemble into 2 heptameric rings which stack back to back to give a disk-like structure with a central cavity, resembling the structure of eukaryotic proteasomes.

Its subcellular location is the cytoplasm. The catalysed reaction is Hydrolysis of proteins to small peptides in the presence of ATP and magnesium. alpha-casein is the usual test substrate. In the absence of ATP, only oligopeptides shorter than five residues are hydrolyzed (such as succinyl-Leu-Tyr-|-NHMec, and Leu-Tyr-Leu-|-Tyr-Trp, in which cleavage of the -Tyr-|-Leu- and -Tyr-|-Trp bonds also occurs).. Cleaves peptides in various proteins in a process that requires ATP hydrolysis. Has a chymotrypsin-like activity. Plays a major role in the degradation of misfolded proteins. This is ATP-dependent Clp protease proteolytic subunit from Bacteroides thetaiotaomicron (strain ATCC 29148 / DSM 2079 / JCM 5827 / CCUG 10774 / NCTC 10582 / VPI-5482 / E50).